A 128-amino-acid chain; its full sequence is uncharacterized protein (128 aa).

Residues 6-74 (GSKLQGKITG…KDGKIGLSIK (69 aa)) form the S1 motif domain. The segment at 72-128 (SIKKAKDRPQARPRNDFRPKESFEQKMNKFLKDSEDRLSSLKRNTESKRGGRGARRG) is disordered. Residues 78-120 (DRPQARPRNDFRPKESFEQKMNKFLKDSEDRLSSLKRNTESKR) are compositionally biased toward basic and acidic residues.

Belongs to the peptidase U57 family.

This is an uncharacterized protein from Bacillus subtilis (strain 168).